The sequence spans 212 residues: Orotate phosphoribosyltransferase (212 aa).

5-phospho-alpha-D-ribose 1-diphosphate-binding positions include Arg-95, Lys-99, His-101, and Asp-121–Ser-129. Thr-125 contacts orotate.

The protein belongs to the purine/pyrimidine phosphoribosyltransferase family. PyrE subfamily. As to quaternary structure, homodimer. Mg(2+) is required as a cofactor.

It catalyses the reaction orotidine 5'-phosphate + diphosphate = orotate + 5-phospho-alpha-D-ribose 1-diphosphate. The protein operates within pyrimidine metabolism; UMP biosynthesis via de novo pathway; UMP from orotate: step 1/2. Catalyzes the transfer of a ribosyl phosphate group from 5-phosphoribose 1-diphosphate to orotate, leading to the formation of orotidine monophosphate (OMP). The chain is Orotate phosphoribosyltransferase from Lactobacillus johnsonii (strain CNCM I-12250 / La1 / NCC 533).